A 258-amino-acid chain; its full sequence is Leucyl/phenylalanyl-tRNA--protein transferase (258 aa).

A disordered region spans residues 199-220 (GGSDGPAPDQSIGMSSSGGVSD). Positions 209–220 (SIGMSSSGGVSD) are enriched in low complexity.

This sequence belongs to the L/F-transferase family.

The protein resides in the cytoplasm. It catalyses the reaction N-terminal L-lysyl-[protein] + L-leucyl-tRNA(Leu) = N-terminal L-leucyl-L-lysyl-[protein] + tRNA(Leu) + H(+). The catalysed reaction is N-terminal L-arginyl-[protein] + L-leucyl-tRNA(Leu) = N-terminal L-leucyl-L-arginyl-[protein] + tRNA(Leu) + H(+). It carries out the reaction L-phenylalanyl-tRNA(Phe) + an N-terminal L-alpha-aminoacyl-[protein] = an N-terminal L-phenylalanyl-L-alpha-aminoacyl-[protein] + tRNA(Phe). Functionally, functions in the N-end rule pathway of protein degradation where it conjugates Leu, Phe and, less efficiently, Met from aminoacyl-tRNAs to the N-termini of proteins containing an N-terminal arginine or lysine. The chain is Leucyl/phenylalanyl-tRNA--protein transferase from Hyphomonas neptunium (strain ATCC 15444).